The following is a 379-amino-acid chain: Neutral protease 2 homolog TRV_03208 (379 aa).

The N-terminal stretch at 1–19 is a signal peptide; it reads MKFFTALAAVGALLAPALA. Residues 20–187 constitute a propeptide that is removed on maturation; that stretch reads LPTPASEEAS…DYFSKSLDKR (168 aa). 2 cysteine pairs are disulfide-bonded: Cys193/Cys263 and Cys270/Cys288. Asn221 carries N-linked (GlcNAc...) asparagine glycosylation. Residue His312 coordinates Zn(2+). Glu313 is an active-site residue. The Zn(2+) site is built by His316 and Asp327.

Belongs to the peptidase M35 family. Requires Zn(2+) as cofactor.

It localises to the secreted. The enzyme catalyses Preferential cleavage of bonds with hydrophobic residues in P1'. Also 3-Asn-|-Gln-4 and 8-Gly-|-Ser-9 bonds in insulin B chain.. Functionally, secreted metalloproteinase that allows assimilation of proteinaceous substrates. Shows high activities on basic nuclear substrates such as histone and protamine. May be involved in virulence. The polypeptide is Neutral protease 2 homolog TRV_03208 (Trichophyton verrucosum (strain HKI 0517)).